Reading from the N-terminus, the 439-residue chain is Mitochondrial distribution and morphology protein 12 (439 aa).

The SMP-LTD domain maps to 1 to 439 (MSIDVNWRSA…VYPSFWTFLI (439 aa)). Residues 70 to 85 (YEEDDDDHTSDASEEL) are compositionally biased toward acidic residues. Disordered stretches follow at residues 70-102 (YEED…ELNE), 184-274 (SGWS…PPRM), and 353-386 (GSEQ…RHGG). Positions 197–212 (GRSERHAGMKHQRAEP) are enriched in basic and acidic residues. A compositionally biased stretch (polar residues) spans 215-230 (DTSNSTSRPSTANTLP). A compositionally biased stretch (low complexity) spans 231-240 (SHPSSSSKNS). The span at 247–261 (RNDHPSLHAGEHIED) shows a compositional bias: basic and acidic residues.

This sequence belongs to the MDM12 family. Component of the ER-mitochondria encounter structure (ERMES) or MDM complex, composed of mmm1, mdm10, mdm12 and mdm34. A mmm1 homodimer associates with one molecule of mdm12 on each side in a pairwise head-to-tail manner, and the SMP-LTD domains of mmm1 and mdm12 generate a continuous hydrophobic tunnel for phospholipid trafficking.

It localises to the mitochondrion outer membrane. Its subcellular location is the endoplasmic reticulum membrane. Functionally, component of the ERMES/MDM complex, which serves as a molecular tether to connect the endoplasmic reticulum (ER) and mitochondria. Components of this complex are involved in the control of mitochondrial shape and protein biogenesis, and function in nonvesicular lipid trafficking between the ER and mitochondria. Mdm12 is required for the interaction of the ER-resident membrane protein mmm1 and the outer mitochondrial membrane-resident beta-barrel protein mdm10. The mdm12-mmm1 subcomplex functions in the major beta-barrel assembly pathway that is responsible for biogenesis of all mitochondrial outer membrane beta-barrel proteins, and acts in a late step after the SAM complex. The mdm10-mdm12-mmm1 subcomplex further acts in the TOM40-specific pathway after the action of the mdm12-mmm1 complex. Essential for establishing and maintaining the structure of mitochondria and maintenance of mtDNA nucleoids. The protein is Mitochondrial distribution and morphology protein 12 of Neosartorya fischeri (strain ATCC 1020 / DSM 3700 / CBS 544.65 / FGSC A1164 / JCM 1740 / NRRL 181 / WB 181) (Aspergillus fischerianus).